The sequence spans 434 residues: Putative ankyrin repeat protein FPV219 (434 aa).

ANK repeat units lie at residues 33–62 (DDLS…DVNL), 66–95 (EVCS…DTDC), 101–131 (HGTP…HEIY), 132–161 (TKNH…DVNT), 165–195 (LYGY…ESYS), 196–225 (LYPS…DVNA), and 229–258 (EGNT…DTSI).

The polypeptide is Putative ankyrin repeat protein FPV219 (Fowlpox virus (strain NVSL) (FPV)).